A 1383-amino-acid chain; its full sequence is DNA-directed RNA polymerase subunit beta (1383 aa).

Belongs to the RNA polymerase beta chain family. As to quaternary structure, the RNAP catalytic core consists of 2 alpha, 1 beta, 1 beta' and 1 omega subunit. When a sigma factor is associated with the core the holoenzyme is formed, which can initiate transcription.

The enzyme catalyses RNA(n) + a ribonucleoside 5'-triphosphate = RNA(n+1) + diphosphate. Functionally, DNA-dependent RNA polymerase catalyzes the transcription of DNA into RNA using the four ribonucleoside triphosphates as substrates. This is DNA-directed RNA polymerase subunit beta from Bartonella quintana (strain Toulouse) (Rochalimaea quintana).